A 176-amino-acid polypeptide reads, in one-letter code: ATP-dependent protease subunit HslV (176 aa).

Thr6 is an active-site residue. Ser161, Cys164, and Thr167 together coordinate Na(+).

It belongs to the peptidase T1B family. HslV subfamily. A double ring-shaped homohexamer of HslV is capped on each side by a ring-shaped HslU homohexamer. The assembly of the HslU/HslV complex is dependent on binding of ATP.

It localises to the cytoplasm. It catalyses the reaction ATP-dependent cleavage of peptide bonds with broad specificity.. With respect to regulation, allosterically activated by HslU binding. Functionally, protease subunit of a proteasome-like degradation complex believed to be a general protein degrading machinery. The chain is ATP-dependent protease subunit HslV from Thermosipho melanesiensis (strain DSM 12029 / CIP 104789 / BI429).